Here is a 271-residue protein sequence, read N- to C-terminus: Formamidopyrimidine-DNA glycosylase (271 aa).

Pro2 functions as the Schiff-base intermediate with DNA in the catalytic mechanism. Glu3 functions as the Proton donor in the catalytic mechanism. Catalysis depends on Lys57, which acts as the Proton donor; for beta-elimination activity. Residues His90, Arg109, and Lys151 each coordinate DNA. An FPG-type zinc finger spans residues 236–270 (HVYGRGGETCTQCGHLLSEIKLGQRATVFCSLCQK). The active-site Proton donor; for delta-elimination activity is Arg260.

The protein belongs to the FPG family. Monomer. It depends on Zn(2+) as a cofactor.

The catalysed reaction is Hydrolysis of DNA containing ring-opened 7-methylguanine residues, releasing 2,6-diamino-4-hydroxy-5-(N-methyl)formamidopyrimidine.. It catalyses the reaction 2'-deoxyribonucleotide-(2'-deoxyribose 5'-phosphate)-2'-deoxyribonucleotide-DNA = a 3'-end 2'-deoxyribonucleotide-(2,3-dehydro-2,3-deoxyribose 5'-phosphate)-DNA + a 5'-end 5'-phospho-2'-deoxyribonucleoside-DNA + H(+). Involved in base excision repair of DNA damaged by oxidation or by mutagenic agents. Acts as a DNA glycosylase that recognizes and removes damaged bases. Has a preference for oxidized purines, such as 7,8-dihydro-8-oxoguanine (8-oxoG). Has AP (apurinic/apyrimidinic) lyase activity and introduces nicks in the DNA strand. Cleaves the DNA backbone by beta-delta elimination to generate a single-strand break at the site of the removed base with both 3'- and 5'-phosphates. The polypeptide is Formamidopyrimidine-DNA glycosylase (Shewanella halifaxensis (strain HAW-EB4)).